The following is an 804-amino-acid chain: Leucine--tRNA ligase (804 aa).

Positions 40-51 (PYPSGQGLHVGH) match the 'HIGH' region motif. A 'KMSKS' region motif is present at residues 576 to 580 (KMSKS). Residue Lys-579 participates in ATP binding.

This sequence belongs to the class-I aminoacyl-tRNA synthetase family.

The protein resides in the cytoplasm. It carries out the reaction tRNA(Leu) + L-leucine + ATP = L-leucyl-tRNA(Leu) + AMP + diphosphate. The protein is Leucine--tRNA ligase of Oceanobacillus iheyensis (strain DSM 14371 / CIP 107618 / JCM 11309 / KCTC 3954 / HTE831).